A 429-amino-acid chain; its full sequence is Prenyltransferase okaC (429 aa).

Residues Arg101, Lys189, Tyr191, Lys257, Tyr259, Tyr342, Tyr406, and Tyr410 each coordinate dimethylallyl diphosphate.

It belongs to the tryptophan dimethylallyltransferase family.

The catalysed reaction is cyclo(L-Trp-L-Trp) + 2 dimethylallyl diphosphate = cyclo(N(8)-(alpha,alpha-dimethylallyl)-L-Trp-6a-(alpha,alpha-dimethylallyl)-L-Trp) + 2 diphosphate. The protein operates within alkaloid biosynthesis. Functionally, prenyltransferase; part of the gene cluster that mediates the biosynthesis of okaramine B, a prenylated indole alkaloid that possesses an unusual octacyclic ring system, including a four-membered azetidine ring and an eight-membered azocine ring, and that exhibits insecticidal activity against silkworm larvae. Within the pathway, okaC performs asymmetric reverse prenylation of cyclo(L-Trp-L-Trp) at N-1 and C-2' of the indole ring to produce the cyclic prenylated tryptophan dimer cyclo(N8-(alpha,alpha-dimethylallyl)-L-Trp-6a-(alpha,alpha-dime-thylallyl)-L-Trp). The biosynthesis begins with the NRPS okaA that condenses two tryptophan molecules into cyclo(L-Trp-L-Trp). Prenylation by the prenyltransferase okaC then leads to the formation of cyclo(N8-(alpha,alpha-dimethylallyl)-L-Trp-6a-(alpha,alpha-dime-thylallyl)-L-Trp). This is followed by indole 2,3-epoxidation by the FAD-dependent monooxygenase okaB to facilitate the formation of the hexahydropyrrolo[2,3-b]indole (HPI) moiety of okaramine C. The cytochrome P450 monooxygenase okaD then likely catalyzes formation of the eight-membered ring of okaramine A. The dioxygenase okaE further forms the unusual 2-dimethyl-3-methyl-azetidine ring to yield 12-deshydroxyl okaramine E, as well as the hydroxylation of 12-deshydroxyl okaramine E to produce okaramine E. The cytochrome P450 monoxygenase okaG converts 12-deshydroxyl okaramine E into 3-desmethyl okaramine B which is further methylated by the methyltransferase okaF into okaramine B. In a shunt pathway, okaG and okaF together are also able to convert okaramine E into okaramine D. Okaramine H is produced by nonenzymatic conversion from okaramine A. The chain is Prenyltransferase okaC from Penicillium ochrochloron.